The primary structure comprises 232 residues: Ribonuclease 3 (232 aa).

The region spanning 5 to 134 (ENLLFDRFGL…FLGALLLDKG (130 aa)) is the RNase III domain. E47 lines the Mg(2+) pocket. D51 is a catalytic residue. Residues D120 and E123 each contribute to the Mg(2+) site. E123 is an active-site residue. The DRBM domain occupies 160 to 229 (DYKTKLQELL…AKNAFEKENH (70 aa)).

Belongs to the ribonuclease III family. Homodimer. The cofactor is Mg(2+).

Its subcellular location is the cytoplasm. It catalyses the reaction Endonucleolytic cleavage to 5'-phosphomonoester.. Functionally, digests double-stranded RNA. Involved in the processing of primary rRNA transcript to yield the immediate precursors to the large and small rRNAs (23S and 16S). Processes some mRNAs, and tRNAs when they are encoded in the rRNA operon. Processes pre-crRNA and tracrRNA of type II CRISPR loci if present in the organism. This is Ribonuclease 3 from Streptococcus gordonii (strain Challis / ATCC 35105 / BCRC 15272 / CH1 / DL1 / V288).